The following is a 303-amino-acid chain: Probable 5-dehydro-4-deoxyglucarate dehydratase (303 aa).

Belongs to the DapA family.

The catalysed reaction is 5-dehydro-4-deoxy-D-glucarate + H(+) = 2,5-dioxopentanoate + CO2 + H2O. It participates in carbohydrate acid metabolism; D-glucarate degradation; 2,5-dioxopentanoate from D-glucarate: step 2/2. This chain is Probable 5-dehydro-4-deoxyglucarate dehydratase, found in Agrobacterium fabrum (strain C58 / ATCC 33970) (Agrobacterium tumefaciens (strain C58)).